The primary structure comprises 581 residues: Sulfate adenylyltransferase (581 aa).

Positions 1–176 (MANAPHGGVL…VQAIQAPTHF (176 aa)) are N-terminal. Residues 177–401 (DYVPLRFTPA…LRESYPPRPQ (225 aa)) form a catalytic region. Gln-204 lines the sulfate pocket. ATP-binding positions include 204–207 (QTRN) and 298–301 (GRDH). Catalysis depends on residues Thr-205, Arg-206, and Asn-207. Arg-206 contacts sulfate. Residue Ala-302 coordinates sulfate. Met-340 is a binding site for ATP. Residues 402–581 (QGFTILLTGL…IMILESQNLV (180 aa)) form an allosteric regulation domain; adenylyl-sulfate kinase-like region. Residues 441–444 (EELR), 486–487 (TA), and Arg-526 each bind 3'-phosphoadenylyl sulfate.

The protein in the N-terminal section; belongs to the sulfate adenylyltransferase family. In the C-terminal section; belongs to the APS kinase family. As to quaternary structure, homohexamer. Dimer of trimers.

It localises to the cytoplasm. The catalysed reaction is sulfate + ATP + H(+) = adenosine 5'-phosphosulfate + diphosphate. It participates in sulfur metabolism; hydrogen sulfide biosynthesis; sulfite from sulfate: step 1/3. Its activity is regulated as follows. Allosterically inhibited by 3'-phosphoadenosine 5'-phosphosulfate (PAPS). Its function is as follows. Catalyzes the first intracellular reaction of sulfate assimilation, forming adenosine-5'-phosphosulfate (APS) from inorganic sulfate and ATP. Plays an important role in sulfate activation as a component of the biosynthesis pathway of sulfur-containing amino acids. This chain is Sulfate adenylyltransferase, found in Cryptococcus neoformans var. neoformans serotype D (strain B-3501A) (Filobasidiella neoformans).